Consider the following 295-residue polypeptide: Small ribosomal subunit protein uS2 (295 aa).

Residues 263–295 (KKFSKTKNIDEETNTEFEKALNDADENKNSDNA) form a disordered region. A compositionally biased stretch (basic and acidic residues) spans 278–295 (EFEKALNDADENKNSDNA).

Belongs to the universal ribosomal protein uS2 family.

The sequence is that of Small ribosomal subunit protein uS2 from Rickettsia peacockii (strain Rustic).